Consider the following 308-residue polypeptide: Tetraacyldisaccharide 4'-kinase (308 aa).

63-70 (SFGGNGKT) contributes to the ATP binding site.

It belongs to the LpxK family.

The enzyme catalyses a lipid A disaccharide + ATP = a lipid IVA + ADP + H(+). It functions in the pathway glycolipid biosynthesis; lipid IV(A) biosynthesis; lipid IV(A) from (3R)-3-hydroxytetradecanoyl-[acyl-carrier-protein] and UDP-N-acetyl-alpha-D-glucosamine: step 6/6. Its function is as follows. Transfers the gamma-phosphate of ATP to the 4'-position of a tetraacyldisaccharide 1-phosphate intermediate (termed DS-1-P) to form tetraacyldisaccharide 1,4'-bis-phosphate (lipid IVA). The protein is Tetraacyldisaccharide 4'-kinase of Campylobacter jejuni subsp. jejuni serotype O:2 (strain ATCC 700819 / NCTC 11168).